A 216-amino-acid polypeptide reads, in one-letter code: Regulator of G-protein signaling 19 (216 aa).

Positions 1-19 are enriched in basic and acidic residues; sequence MPTPHEAEKQHTGPEEADR. Residues 1–30 are disordered; that stretch reads MPTPHEAEKQHTGPEEADRPPSMSSHDAAP. A Phosphoserine; by CK2 modification is found at S24. Residues 90–206 enclose the RGS domain; the sequence is SFDKLMHSPT…LTSPTYRSLL (117 aa). At S97 the chain carries Phosphoserine. A Phosphoserine; by MAPK1 and MAPK3 modification is found at S151. An interaction with GIPC region spans residues 207-216; sequence LQGAPQSSEA.

In terms of assembly, interacts with GIPC PDZ domain. Interacts with GNAO1. Fatty acylated. Heavily palmitoylated in the cysteine string motif. Post-translationally, phosphorylated, mainly on serine residues.

It localises to the membrane. Functionally, inhibits signal transduction by increasing the GTPase activity of G protein alpha subunits thereby driving them into their inactive GDP-bound form. Binds to G-alpha subfamily 1 members, predominantly to G(i)-alpha-3. Activity on G(z)-alpha is inhibited by phosphorylation and palmitoylation of the G-protein. The protein is Regulator of G-protein signaling 19 (Rgs19) of Rattus norvegicus (Rat).